We begin with the raw amino-acid sequence, 304 residues long: MQNGKIKPENLLRRSPTNRKLTTGCEILDGCLRGGISCDSLTEIVAESGCGKTQLCLQLSLCTQLPISHGGLNGSSLYLHSEFPFPFRRLHQLSHTFHQSNPSIYANYNDNPCDHVFVQNVHSVDHLFDIMPRIDGFVGNSKTRFPLKLIVLDSVAALFRSEFDNTPSDLKKRSSLFFKISGKLKQLASKFDLAIVITNQVTDLVETSDGLSGLRIGNLRYLYSSGRRVVPSLGLAWANCVNSRFFISRSDGSIVKDRSEKDENCSSSVSRSAKRRLDIVFSPYLPGSSCEFMITREGICAVQA.

Residue Ala46–Thr53 participates in ATP binding.

Belongs to the RecA family. RAD51 subfamily. In terms of assembly, interacts with RAD51C. In terms of tissue distribution, detected in various tissues. More expressed in reproductive tissues than in vegetative tissues, with the highest level in young flower buds.

Its subcellular location is the nucleus. Functionally, plays essential roles in DNA damage repair in both somatic and meiotic cells. It is important for postsynaptic events following pachytene in meiosis. It is also required for DNA cross-links repair and is involved in double strand breaks (DSBs) repair. The sequence is that of DNA repair protein XRCC3 homolog (XRCC3) from Arabidopsis thaliana (Mouse-ear cress).